The following is a 261-amino-acid chain: Cytochrome c oxidase subunit 3 (261 aa).

Topologically, residues 1–15 are mitochondrial matrix; the sequence is MTKQMHAFHMVNPSP. Residues 16–34 form a helical membrane-spanning segment; the sequence is WPLTGAASAFMLTSGLAMW. Over 35–40 the chain is Mitochondrial intermembrane; that stretch reads FHKHSN. The chain crosses the membrane as a helical span at residues 41-66; the sequence is TLIFLSMILMLLTMYQWWRDITREGT. At 67 to 72 the chain is on the mitochondrial matrix side; that stretch reads FQGHHT. Residues 73–105 form a helical membrane-spanning segment; the sequence is SLVQKSLRYGMILFIVSEVCFFFGFFWTFYHSS. At 106–128 the chain is on the mitochondrial intermembrane side; sequence LSPSPDLGMMWPPKGVIPLDPFE. A helical transmembrane segment spans residues 129–152; sequence IPLLNTAILLGSGVSVTWAHHSLM. At 153–155 the chain is on the mitochondrial matrix side; sequence EKT. Residues 156–183 traverse the membrane as a helical segment; it reads HKDMVISLSITIILGIYFTLLQGMEYFN. The Mitochondrial intermembrane segment spans residues 184 to 190; sequence STFNISD. A helical membrane pass occupies residues 191 to 223; sequence NAYGSTFFVATGFHGGHVIIGTLFLTVCLLRQL. Over 224–232 the chain is Mitochondrial matrix; that stretch reads MFHFTSSHH. A helical transmembrane segment spans residues 233–256; sequence FGFEAAAWYWHFVDVVWLFLFISI. Residues 257–261 are Mitochondrial intermembrane-facing; it reads YWWGS.

This sequence belongs to the cytochrome c oxidase subunit 3 family. In terms of assembly, component of the cytochrome c oxidase (complex IV, CIV), a multisubunit enzyme composed of 14 subunits. The complex is composed of a catalytic core of 3 subunits MT-CO1, MT-CO2 and MT-CO3, encoded in the mitochondrial DNA, and 11 supernumerary subunits COX4I, COX5A, COX5B, COX6A, COX6B, COX6C, COX7A, COX7B, COX7C, COX8 and NDUFA4, which are encoded in the nuclear genome. The complex exists as a monomer or a dimer and forms supercomplexes (SCs) in the inner mitochondrial membrane with NADH-ubiquinone oxidoreductase (complex I, CI) and ubiquinol-cytochrome c oxidoreductase (cytochrome b-c1 complex, complex III, CIII), resulting in different assemblies (supercomplex SCI(1)III(2)IV(1) and megacomplex MCI(2)III(2)IV(2)).

Its subcellular location is the mitochondrion inner membrane. The enzyme catalyses 4 Fe(II)-[cytochrome c] + O2 + 8 H(+)(in) = 4 Fe(III)-[cytochrome c] + 2 H2O + 4 H(+)(out). Component of the cytochrome c oxidase, the last enzyme in the mitochondrial electron transport chain which drives oxidative phosphorylation. The respiratory chain contains 3 multisubunit complexes succinate dehydrogenase (complex II, CII), ubiquinol-cytochrome c oxidoreductase (cytochrome b-c1 complex, complex III, CIII) and cytochrome c oxidase (complex IV, CIV), that cooperate to transfer electrons derived from NADH and succinate to molecular oxygen, creating an electrochemical gradient over the inner membrane that drives transmembrane transport and the ATP synthase. Cytochrome c oxidase is the component of the respiratory chain that catalyzes the reduction of oxygen to water. Electrons originating from reduced cytochrome c in the intermembrane space (IMS) are transferred via the dinuclear copper A center (CU(A)) of subunit 2 and heme A of subunit 1 to the active site in subunit 1, a binuclear center (BNC) formed by heme A3 and copper B (CU(B)). The BNC reduces molecular oxygen to 2 water molecules using 4 electrons from cytochrome c in the IMS and 4 protons from the mitochondrial matrix. This is Cytochrome c oxidase subunit 3 (MT-CO3) from Myxine glutinosa (Atlantic hagfish).